Consider the following 119-residue polypeptide: Putative F-box protein At2g39415 (119 aa).

The region spanning 37–92 (IDSISSLPDVILQQILSSLPTNLAIRTSVLSTRWRHVWSDTPYIYFDGPGTLYRGL) is the F-box domain.

The chain is Putative F-box protein At2g39415 from Arabidopsis thaliana (Mouse-ear cress).